A 258-amino-acid polypeptide reads, in one-letter code: Tryptophan synthase alpha chain (258 aa).

Catalysis depends on proton acceptor residues Glu47 and Asp58.

It belongs to the TrpA family. As to quaternary structure, tetramer of two alpha and two beta chains.

The catalysed reaction is (1S,2R)-1-C-(indol-3-yl)glycerol 3-phosphate + L-serine = D-glyceraldehyde 3-phosphate + L-tryptophan + H2O. Its pathway is amino-acid biosynthesis; L-tryptophan biosynthesis; L-tryptophan from chorismate: step 5/5. Functionally, the alpha subunit is responsible for the aldol cleavage of indoleglycerol phosphate to indole and glyceraldehyde 3-phosphate. In Bacillus cereus (strain G9842), this protein is Tryptophan synthase alpha chain.